A 494-amino-acid chain; its full sequence is Sugar phosphate exchanger 3 (494 aa).

Residues 16 to 36 (FSHHHVVVFLLTFFSYSLLHA) form a helical membrane-spanning segment. Residue Asn58 is glycosylated (N-linked (GlcNAc...) asparagine). 5 consecutive transmembrane segments (helical) span residues 81–101 (TLFLGTLDTIFLFSYAVGLFI), 113–133 (WVLSFGMCSSALVVFVFGALT), 147–167 (LWIVNGLLQSTGWPCVVAVMG), 177–197 (VVFGLWSACASVGNILGACLA), and 209–229 (FLVTASVQFAGGIVIFFGLLV). Asn266 is a glycosylation site (N-linked (GlcNAc...) asparagine). 6 helical membrane passes run 297 to 317 (LAYACLKLVNYSFFFWLPFYL), 333 to 353 (IWYDVGGIIGGTLQGFISDVL), 357 to 377 (APVLALSLLLAVGSLIGYSRS), 386 to 406 (LLMTVTGFFIGGPSNMISSAI), 428 to 448 (GIVDGSGSIGAAVGQYLVSLI), and 452 to 472 (LGWMWVFYFFILMTSCTIVFI).

The protein belongs to the major facilitator superfamily. Organophosphate:Pi antiporter (OPA) (TC 2.A.1.4) family. Interacts with ATRAID; the interaction is direct and both proteins are mutually dependent for their stability. In terms of processing, glycosylated. In terms of tissue distribution, expressed in liver, kidney, intestine and pancreas.

The protein localises to the endoplasmic reticulum membrane. It localises to the lysosome membrane. Functionally, unlike the other SLC37 members, lacks glucose-6-phosphate antiporter activity. In osteoclasts, forms a transporter complex with ATRAID for nitrogen-containing-bisphophonates (N-BPs) required for releasing N-BP molecules that have trafficked to lysosomes through fluid-phase endocytosis into the cytosol. This is Sugar phosphate exchanger 3 from Homo sapiens (Human).